The primary structure comprises 233 residues: Protein lin-7 homolog A (233 aa).

In terms of domain architecture, L27 spans 25 to 80 (LDRDVARAIELLEKLQESGEVPVHKLQSLKKVLQSEFCTAIREVYQYMHETITVNG). A PDZ domain is found at 108–190 (VVELPKTDEG…SVKLVVRYTP (83 aa)).

Belongs to the lin-7 family. As to quaternary structure, forms a complex with CASK and CASKIN1. Component of the brain-specific heterotrimeric complex (LIN-10-LIN-2-LIN-7 complex) composed of at least APBA1, CASK, and LIN7, which associates with the motor protein KIF17 to transport vesicles along microtubules. Can also interact with other modular proteins containing protein-protein interaction domains like PALS1, PALS2, MPP7, DLG1, DLG2 and DLG3 through its L27 domain. Interacts with DLG4, GRIN2B and MARCHF11 as well as CDH1 and CTNNB1, the channels KCNJ12/Kir2.2, KCNJ4/Kir2.3 and probably KCNJ2/Kir2.1 and SLC6A12/BGT-1 via its PDZ domain. The association of LIN7A with cadherin and beta-catenin is calcium-dependent, occurs at synaptic junctions and requires the actin cytoskeleton. Interacts with EGFR, ERBB2, ERBB3 and ERBB4 with both PDZ and KID domains. Associates with KIF17 via APBA1. Interacts with HTR4. Forms a tripartite complex composed of DLG1, MPP7 and LIN7 (LIN7A or LIN7C).

It localises to the cell membrane. Its subcellular location is the basolateral cell membrane. The protein resides in the cell junction. The protein localises to the postsynaptic density membrane. It is found in the tight junction. Plays a role in establishing and maintaining the asymmetric distribution of channels and receptors at the plasma membrane of polarized cells. Forms membrane-associated multiprotein complexes that may regulate delivery and recycling of proteins to the correct membrane domains. The tripartite complex composed of LIN7 (LIN7A, LIN7B or LIN7C), CASK and APBA1 associates with the motor protein KIF17 to transport vesicles containing N-methyl-D-aspartate (NMDA) receptor subunit NR2B along microtubules. This complex may have the potential to couple synaptic vesicle exocytosis to cell adhesion in brain. Ensures the proper localization of GRIN2B (subunit 2B of the NMDA receptor) to neuronal postsynaptic density and may function in localizing synaptic vesicles at synapses where it is recruited by beta-catenin and cadherin. Required to localize Kir2 channels, GABA transporter (SLC6A12) and EGFR/ERBB1, ERBB2, ERBB3 and ERBB4 to the basolateral membrane of epithelial cells. This Bos taurus (Bovine) protein is Protein lin-7 homolog A (LIN7A).